A 65-amino-acid polypeptide reads, in one-letter code: Large ribosomal subunit protein bL28 (65 aa).

Belongs to the bacterial ribosomal protein bL28 family.

The sequence is that of Large ribosomal subunit protein bL28 from Lachnoclostridium phytofermentans (strain ATCC 700394 / DSM 18823 / ISDg) (Clostridium phytofermentans).